A 335-amino-acid chain; its full sequence is Anthranilate phosphoribosyltransferase (335 aa).

5-phospho-alpha-D-ribose 1-diphosphate-binding positions include Gly79, 82–83 (GD), Thr87, 89–92 (NIST), 107–115 (KHGSRSVSS), and Ser119. An anthranilate-binding site is contributed by Gly79. Ser91 serves as a coordination point for Mg(2+). Arg165 contacts anthranilate. Positions 223 and 224 each coordinate Mg(2+).

The protein belongs to the anthranilate phosphoribosyltransferase family. Homodimer. Requires Mg(2+) as cofactor.

It carries out the reaction N-(5-phospho-beta-D-ribosyl)anthranilate + diphosphate = 5-phospho-alpha-D-ribose 1-diphosphate + anthranilate. It participates in amino-acid biosynthesis; L-tryptophan biosynthesis; L-tryptophan from chorismate: step 2/5. In terms of biological role, catalyzes the transfer of the phosphoribosyl group of 5-phosphorylribose-1-pyrophosphate (PRPP) to anthranilate to yield N-(5'-phosphoribosyl)-anthranilate (PRA). This is Anthranilate phosphoribosyltransferase from Helicobacter pylori (strain G27).